A 206-amino-acid chain; its full sequence is dITP/XTP pyrophosphatase (206 aa).

7–12 (SSHGYK) serves as a coordination point for substrate. The Proton acceptor role is filled by aspartate 70. Aspartate 70 is a Mg(2+) binding site. Substrate-binding positions include threonine 71, 154 to 157 (FGYD), lysine 177, and 182 to 183 (HR).

Belongs to the HAM1 NTPase family. In terms of assembly, homodimer. It depends on Mg(2+) as a cofactor.

It carries out the reaction XTP + H2O = XMP + diphosphate + H(+). The catalysed reaction is dITP + H2O = dIMP + diphosphate + H(+). It catalyses the reaction ITP + H2O = IMP + diphosphate + H(+). In terms of biological role, pyrophosphatase that catalyzes the hydrolysis of nucleoside triphosphates to their monophosphate derivatives, with a high preference for the non-canonical purine nucleotides XTP (xanthosine triphosphate), dITP (deoxyinosine triphosphate) and ITP. Seems to function as a house-cleaning enzyme that removes non-canonical purine nucleotides from the nucleotide pool, thus preventing their incorporation into DNA/RNA and avoiding chromosomal lesions. In Chlamydia abortus (strain DSM 27085 / S26/3) (Chlamydophila abortus), this protein is dITP/XTP pyrophosphatase.